The sequence spans 369 residues: uncharacterized protein (369 aa).

This is an uncharacterized protein from Haloarcula marismortui (strain ATCC 43049 / DSM 3752 / JCM 8966 / VKM B-1809) (Halobacterium marismortui).